We begin with the raw amino-acid sequence, 163 residues long: Small ribosomal subunit protein uS9 (163 aa).

Residues 1–25 (MAENTNNSAVTETEETTAAFTTETN) are compositionally biased toward low complexity. The interval 1-40 (MAENTNNSAVTETEETTAAFTTETNSGAGTGTSTIAPGYG) is disordered.

This sequence belongs to the universal ribosomal protein uS9 family.

This chain is Small ribosomal subunit protein uS9, found in Bifidobacterium animalis subsp. lactis (strain AD011).